A 247-amino-acid polypeptide reads, in one-letter code: 2,3-bisphosphoglycerate-dependent phosphoglycerate mutase (247 aa).

Residues 8–15 (RHGESQWN), 21–22 (TG), Arg60, 87–90 (ERHY), Lys98, 114–115 (RR), and 183–184 (GN) contribute to the substrate site. The active-site Tele-phosphohistidine intermediate is His9. Catalysis depends on Glu87, which acts as the Proton donor/acceptor.

This sequence belongs to the phosphoglycerate mutase family. BPG-dependent PGAM subfamily.

The enzyme catalyses (2R)-2-phosphoglycerate = (2R)-3-phosphoglycerate. Its pathway is carbohydrate degradation; glycolysis; pyruvate from D-glyceraldehyde 3-phosphate: step 3/5. Functionally, catalyzes the interconversion of 2-phosphoglycerate and 3-phosphoglycerate. The sequence is that of 2,3-bisphosphoglycerate-dependent phosphoglycerate mutase from Chlorobium chlorochromatii (strain CaD3).